Here is a 534-residue protein sequence, read N- to C-terminus: Cysteine/serine-rich nuclear protein 2 (534 aa).

Met-1 carries the N-acetylmethionine modification. 2 disordered regions span residues 1 to 52 (MDAF…FTPT) and 480 to 534 (DCGL…PLAV). Low complexity predominate over residues 31–40 (SSDSADSCDS). Residues 42–52 (NPPTTASFTPT) show a composition bias toward polar residues. Basic and acidic residues predominate over residues 480-492 (DCGLKEPESEDLH).

It belongs to the AXUD1 family. As to expression, highest expression detected in thymus, brain and ovary. Low levels detected in naive T-cells.

It is found in the nucleus. Its function is as follows. Binds to the consensus sequence 5'-AGAGTG-3' and has transcriptional activator activity. May play a role in apoptosis. This Mus musculus (Mouse) protein is Cysteine/serine-rich nuclear protein 2 (Csrnp2).